A 295-amino-acid polypeptide reads, in one-letter code: Probable WRKY transcription factor 46 (295 aa).

Positions Gln-98–Ile-166 form a DNA-binding region, WRKY.

The protein belongs to the WRKY group III family. As to quaternary structure, binds to BZR2/BES1 to cooperatively regulate the expression of target genes. Post-translationally, phosphorylated and destabilized by ASK7/BIN2. In terms of tissue distribution, expressed in guard cells, hypocotyls, and in the vascular tissues of cotyledon and root. Mostly expressed in roots, at lower levels in leaves and petioles, and, to a lower extent, in stems, flowers and siliques.

It localises to the nucleus. Its function is as follows. Transcription factor involved in the regulation of osmotic stress responses and stomatal movement. Interacts specifically with the W box (5'-(T)TGAC[CT]-3'), a frequently occurring elicitor-responsive cis-acting element. Positive regulator of EDS1-dependent defense against E.amylovora. Together with WRKY70 and WRKY53, promotes resistance to P.syringae, probably by enhancing salicylic acid (SA)- dependent genes. Contributes to the suppression of jasmonic acid (MeJA)-induced expression of PDF1.2. Together with WRKY54 and WRKY70, promotes brassinosteroid (BR)-regulated plant growth but prevent drought response by modulating gene expression. This chain is Probable WRKY transcription factor 46 (WRKY46), found in Arabidopsis thaliana (Mouse-ear cress).